We begin with the raw amino-acid sequence, 199 residues long: MKFSPLLDELIQSLRCLPGVGPKSAQRMAFQLLERDRKAGLKLASALSSAMSDVGHCQSCRTYTEETLCPICASHKRGSSSTICVVETPADVLAIEAGGHFTGRYFVLLGHLSPLDGVGPEELGLALLERHLASGDVSELILATNPTVEGEATAHFIADMARRHKVMISRIAHGVPVGGELEYVDSTTLALSFNGRLPL.

The segment at 57–72 (CQSCRTYTEETLCPIC) adopts a C4-type zinc-finger fold. One can recognise a Toprim domain in the interval 81-176 (STICVVETPA…MISRIAHGVP (96 aa)).

This sequence belongs to the RecR family.

May play a role in DNA repair. It seems to be involved in an RecBC-independent recombinational process of DNA repair. It may act with RecF and RecO. The chain is Recombination protein RecR from Shewanella putrefaciens (strain CN-32 / ATCC BAA-453).